A 154-amino-acid polypeptide reads, in one-letter code: Transcriptional repressor NrdR (154 aa).

A zinc finger spans residues 3 to 34 (CPFCGANDTKVIDSRLVAEGEQVRRRRECVAC). The region spanning 49 to 139 (PRLIKQDGTR…VYRRFQDLDE (91 aa)) is the ATP-cone domain.

The protein belongs to the NrdR family. It depends on Zn(2+) as a cofactor.

Negatively regulates transcription of bacterial ribonucleotide reductase nrd genes and operons by binding to NrdR-boxes. This is Transcriptional repressor NrdR from Pseudomonas putida (strain ATCC 700007 / DSM 6899 / JCM 31910 / BCRC 17059 / LMG 24140 / F1).